The chain runs to 381 residues: O-antigen chain mannosyltransferase B (381 aa).

Belongs to the glycosyltransferase group 1 family. Glycosyltransferase 4 subfamily.

It carries out the reaction alpha-D-mannosyl-(1-&gt;3)-N-acetyl-alpha-D-glucosaminyl-di-trans,octa-cis-undecaprenyl diphosphate + 2 GDP-alpha-D-mannose = alpha-D-mannosyl-(1-&gt;3)-alpha-D-mannosyl-(1-&gt;3)-alpha-D-mannosyl-(1-&gt;3)-N-acetyl-alpha-D-glucosaminyl-di-trans,octa-cis-undecaprenyl diphosphate + 2 GDP + 2 H(+). It participates in bacterial outer membrane biogenesis; LPS O-antigen biosynthesis. Mannosyltransferase involved in the biosynthesis of the repeat unit of the lipopolysaccharide (LPS) O-antigen region. Catalyzes the transfer of two alpha-(1-&gt;3)-linked mannose residues to the product of the WbdC enzyme during the synthesis of the adapter region. The sequence is that of O-antigen chain mannosyltransferase B from Escherichia coli.